The sequence spans 123 residues: MPTINQLIRIGRESKKDKSTAPALKCCPQKRGVCTRVYTTTPKKPNSALRKVARVRLTNGVEVTSYIPGVGHNLQEHSVVLIRGGRVKDLPGVRYHIVRGTLDSVGVKDRKKSRSKYGAKRPK.

D89 is modified (3-methylthioaspartic acid).

It belongs to the universal ribosomal protein uS12 family. As to quaternary structure, part of the 30S ribosomal subunit. Contacts proteins S8 and S17. May interact with IF1 in the 30S initiation complex.

Its function is as follows. With S4 and S5 plays an important role in translational accuracy. Interacts with and stabilizes bases of the 16S rRNA that are involved in tRNA selection in the A site and with the mRNA backbone. Located at the interface of the 30S and 50S subunits, it traverses the body of the 30S subunit contacting proteins on the other side and probably holding the rRNA structure together. The combined cluster of proteins S8, S12 and S17 appears to hold together the shoulder and platform of the 30S subunit. The protein is Small ribosomal subunit protein uS12 of Geotalea uraniireducens (strain Rf4) (Geobacter uraniireducens).